Consider the following 288-residue polypeptide: 4-hydroxybenzoate octaprenyltransferase (288 aa).

8 helical membrane-spanning segments follow: residues 23–43 (IGSL…GRGI), 46–66 (AKIL…GCVV), 98–118 (ILFV…NSMT), 141–161 (LPQV…FAAV), 163–183 (ESLP…TVAY), 213–233 (LIIG…GWLM), 234–254 (NLGG…THQQ), and 268–288 (AFLN…ISYW).

This sequence belongs to the UbiA prenyltransferase family. It depends on Mg(2+) as a cofactor.

It is found in the cell inner membrane. The catalysed reaction is all-trans-octaprenyl diphosphate + 4-hydroxybenzoate = 4-hydroxy-3-(all-trans-octaprenyl)benzoate + diphosphate. Its pathway is cofactor biosynthesis; ubiquinone biosynthesis. Its function is as follows. Catalyzes the prenylation of para-hydroxybenzoate (PHB) with an all-trans polyprenyl group. Mediates the second step in the final reaction sequence of ubiquinone-8 (UQ-8) biosynthesis, which is the condensation of the polyisoprenoid side chain with PHB, generating the first membrane-bound Q intermediate 3-octaprenyl-4-hydroxybenzoate. The polypeptide is 4-hydroxybenzoate octaprenyltransferase (Yersinia pseudotuberculosis serotype O:1b (strain IP 31758)).